Here is a 702-residue protein sequence, read N- to C-terminus: Elongation factor G 1 (702 aa).

One can recognise a tr-type G domain in the interval 8–290 (ERYRNIGISA…AVIDFLPSPV (283 aa)). GTP contacts are provided by residues 17–24 (AHIDAGKT), 88–92 (DTPGH), and 142–145 (NKMD).

It belongs to the TRAFAC class translation factor GTPase superfamily. Classic translation factor GTPase family. EF-G/EF-2 subfamily.

The protein resides in the cytoplasm. Its function is as follows. Catalyzes the GTP-dependent ribosomal translocation step during translation elongation. During this step, the ribosome changes from the pre-translocational (PRE) to the post-translocational (POST) state as the newly formed A-site-bound peptidyl-tRNA and P-site-bound deacylated tRNA move to the P and E sites, respectively. Catalyzes the coordinated movement of the two tRNA molecules, the mRNA and conformational changes in the ribosome. The polypeptide is Elongation factor G 1 (Cupriavidus pinatubonensis (strain JMP 134 / LMG 1197) (Cupriavidus necator (strain JMP 134))).